The following is a 397-amino-acid chain: Elongation factor Tu-2 (397 aa).

The 197-residue stretch at 10 to 206 folds into the tr-type G domain; sequence KPHVNIGTIG…AVDEFVPEPV (197 aa). Residues 19 to 26 form a G1 region; sequence GHIDHGKT. 19-26 contributes to the GTP binding site; sequence GHIDHGKT. Threonine 26 lines the Mg(2+) pocket. The segment at 62 to 66 is G2; sequence GITIS. A G3 region spans residues 83–86; the sequence is DCPG. Residues 83–87 and 138–141 each bind GTP; these read DCPGH and NKTD. The tract at residues 138 to 141 is G4; it reads NKTD. Residues 176 to 178 form a G5 region; it reads SAL.

Belongs to the TRAFAC class translation factor GTPase superfamily. Classic translation factor GTPase family. EF-Tu/EF-1A subfamily. As to quaternary structure, monomer.

It localises to the cytoplasm. It carries out the reaction GTP + H2O = GDP + phosphate + H(+). GTP hydrolase that promotes the GTP-dependent binding of aminoacyl-tRNA to the A-site of ribosomes during protein biosynthesis. The protein is Elongation factor Tu-2 of Streptomyces ramocissimus.